A 427-amino-acid polypeptide reads, in one-letter code: Glutamate-1-semialdehyde 2,1-aminomutase (427 aa).

K265 bears the N6-(pyridoxal phosphate)lysine mark.

It belongs to the class-III pyridoxal-phosphate-dependent aminotransferase family. HemL subfamily. As to quaternary structure, homodimer. Pyridoxal 5'-phosphate serves as cofactor.

The protein resides in the cytoplasm. It catalyses the reaction (S)-4-amino-5-oxopentanoate = 5-aminolevulinate. Its pathway is porphyrin-containing compound metabolism; protoporphyrin-IX biosynthesis; 5-aminolevulinate from L-glutamyl-tRNA(Glu): step 2/2. The polypeptide is Glutamate-1-semialdehyde 2,1-aminomutase (Pseudomonas fluorescens (strain Pf0-1)).